The chain runs to 208 residues: Protein-L-isoaspartate O-methyltransferase (208 aa).

Serine 59 is an active-site residue.

This sequence belongs to the methyltransferase superfamily. L-isoaspartyl/D-aspartyl protein methyltransferase family.

It localises to the cytoplasm. It catalyses the reaction [protein]-L-isoaspartate + S-adenosyl-L-methionine = [protein]-L-isoaspartate alpha-methyl ester + S-adenosyl-L-homocysteine. Catalyzes the methyl esterification of L-isoaspartyl residues in peptides and proteins that result from spontaneous decomposition of normal L-aspartyl and L-asparaginyl residues. It plays a role in the repair and/or degradation of damaged proteins. This is Protein-L-isoaspartate O-methyltransferase from Aliivibrio fischeri (strain MJ11) (Vibrio fischeri).